The following is a 474-amino-acid chain: tRNA modification GTPase MnmE (474 aa).

Arg-23, Glu-86, and Lys-125 together coordinate (6S)-5-formyl-5,6,7,8-tetrahydrofolate. In terms of domain architecture, TrmE-type G spans 221 to 396 (GIPVAIVGEP…LKEKLLEYVN (176 aa)). Asn-231 is a K(+) binding site. GTP is bound by residues 231–236 (NVGKST), 250–256 (SEIAGTT), and 275–278 (DTAG). Residue Ser-235 coordinates Mg(2+). K(+)-binding residues include Ser-250, Ile-252, and Thr-255. A Mg(2+)-binding site is contributed by Thr-256. Lys-474 provides a ligand contact to (6S)-5-formyl-5,6,7,8-tetrahydrofolate.

The protein belongs to the TRAFAC class TrmE-Era-EngA-EngB-Septin-like GTPase superfamily. TrmE GTPase family. In terms of assembly, homodimer. Heterotetramer of two MnmE and two MnmG subunits. The cofactor is K(+).

The protein localises to the cytoplasm. In terms of biological role, exhibits a very high intrinsic GTPase hydrolysis rate. Involved in the addition of a carboxymethylaminomethyl (cmnm) group at the wobble position (U34) of certain tRNAs, forming tRNA-cmnm(5)s(2)U34. The polypeptide is tRNA modification GTPase MnmE (Christiangramia forsetii (strain DSM 17595 / CGMCC 1.15422 / KT0803) (Gramella forsetii)).